The primary structure comprises 448 residues: MKKTLRFAAVAAGLVASLITVAPSASAQALRAQGASLADEVVAVVNNDVITGRELDQRVGLIARRLQQQKAPVPPTDQLRAQVLNQMVLERIQVQRAKDDGIVVDNATVQATLGRLAQANGMPLDQYKARIEAQGVPWDLFVRDARTELMLSKLREKEVDSKITVSDAEVASYIASQRGPNAGAQQDLRLEHIFVKAPTNAPQADIDAAQKKAEGLLQQALASGTNFERLAKSQSEADDAKKGGDLGFKAPSSLPSDVVDAVSKLRPGEVNPTLIRVPDGFEIVRLVDRRASQNPAASPKIVQTHVRHILLRVGEGKSESQARQQLIDIRRQIEAGGDFEKFARTYSQDGSASQGGDLGWISPGETVPEFERAMNALQDGQVSNPVRTEYGYHLIQVLGRRDAEGSVQQQMDIARQAIGQRKAEQAYSDWLRELRDSSYVQIKLPVGQ.

An N-terminal signal peptide occupies residues 1 to 27; sequence MKKTLRFAAVAAGLVASLITVAPSASA. PpiC domains are found at residues 185–288 and 301–399; these read QQDL…RLVD and IVQT…QVLG. The segment at 230–249 is disordered; it reads LAKSQSEADDAKKGGDLGFK.

Its subcellular location is the periplasm. The enzyme catalyses [protein]-peptidylproline (omega=180) = [protein]-peptidylproline (omega=0). Its function is as follows. Chaperone involved in the correct folding and assembly of outer membrane proteins. Recognizes specific patterns of aromatic residues and the orientation of their side chains, which are found more frequently in integral outer membrane proteins. May act in both early periplasmic and late outer membrane-associated steps of protein maturation. The polypeptide is Chaperone SurA (Burkholderia thailandensis (strain ATCC 700388 / DSM 13276 / CCUG 48851 / CIP 106301 / E264)).